A 100-amino-acid chain; its full sequence is MISEERLLKVILAPHISEKSTVNAEKNNTVVFRVAIDATKAEVKAAVAQLFEVEVDSVRTLVNKGKTKRTGARTGRRSDWKKAYVTLAEGADIDFVGGAE.

It belongs to the universal ribosomal protein uL23 family. As to quaternary structure, part of the 50S ribosomal subunit. Contacts protein L29, and trigger factor when it is bound to the ribosome.

One of the early assembly proteins it binds 23S rRNA. One of the proteins that surrounds the polypeptide exit tunnel on the outside of the ribosome. Forms the main docking site for trigger factor binding to the ribosome. In Shewanella halifaxensis (strain HAW-EB4), this protein is Large ribosomal subunit protein uL23.